A 288-amino-acid polypeptide reads, in one-letter code: Mediator of RNA polymerase II transcription subunit 8 (288 aa).

Positions 4–58 form a coiled coil; it reads EELKQLELLRNRFAQLTSNLGSLRTSVSNSNPLPTYESLQASVNILQANIRSIQD. 3 disordered regions span residues 122 to 150, 191 to 245, and 266 to 288; these read GGVHRRGEHDYDDEGTYGMDEDGDDAPQD, VRTG…GGGM, and PGNVPIESKRIQTVPTRRVAPPR. 2 stretches are compositionally biased toward acidic residues: residues 131–148 and 200–221; these read DYDDEGTYGMDEDGDDAP and EESEDDDEDEEEEEEDEEEDEA. Residues 180–228 adopt a coiled-coil conformation; it reads TAEERAAGIENVRTGLRQTLEESEDDDEDEEEEEEDEEEDEAAAAAGNA. Over residues 227–245 the composition is skewed to gly residues; the sequence is NAGGLATGAGGSAAAGGGM.

The protein belongs to the Mediator complex subunit 8 family. Component of the Mediator complex.

It is found in the nucleus. Its function is as follows. Component of the Mediator complex, a coactivator involved in the regulated transcription of nearly all RNA polymerase II-dependent genes. Mediator functions as a bridge to convey information from gene-specific regulatory proteins to the basal RNA polymerase II transcription machinery. Mediator is recruited to promoters by direct interactions with regulatory proteins and serves as a scaffold for the assembly of a functional preinitiation complex with RNA polymerase II and the general transcription factors. This chain is Mediator of RNA polymerase II transcription subunit 8 (MED8), found in Chaetomium globosum (strain ATCC 6205 / CBS 148.51 / DSM 1962 / NBRC 6347 / NRRL 1970) (Soil fungus).